A 185-amino-acid polypeptide reads, in one-letter code: Putative 3-methyladenine DNA glycosylase (185 aa).

Belongs to the DNA glycosylase MPG family.

This Rhizobium meliloti (strain 1021) (Ensifer meliloti) protein is Putative 3-methyladenine DNA glycosylase.